A 259-amino-acid polypeptide reads, in one-letter code: 5'-nucleotidase SurE (259 aa).

A divalent metal cation-binding residues include Asp13, Asp14, Ser44, and Asn100.

Belongs to the SurE nucleotidase family. A divalent metal cation is required as a cofactor.

It localises to the cytoplasm. The catalysed reaction is a ribonucleoside 5'-phosphate + H2O = a ribonucleoside + phosphate. Nucleotidase that shows phosphatase activity on nucleoside 5'-monophosphates. The polypeptide is 5'-nucleotidase SurE (Bacteroides thetaiotaomicron (strain ATCC 29148 / DSM 2079 / JCM 5827 / CCUG 10774 / NCTC 10582 / VPI-5482 / E50)).